Consider the following 419-residue polypeptide: Glucose-1-phosphate adenylyltransferase (419 aa).

Residues Tyr-107, Gly-172, 187 to 188 (EK), and Ser-205 each bind alpha-D-glucose 1-phosphate.

It belongs to the bacterial/plant glucose-1-phosphate adenylyltransferase family. Homotetramer.

The enzyme catalyses alpha-D-glucose 1-phosphate + ATP + H(+) = ADP-alpha-D-glucose + diphosphate. The protein operates within glycan biosynthesis; glycogen biosynthesis. Involved in the biosynthesis of ADP-glucose, a building block required for the elongation reactions to produce glycogen. Catalyzes the reaction between ATP and alpha-D-glucose 1-phosphate (G1P) to produce pyrophosphate and ADP-Glc. The protein is Glucose-1-phosphate adenylyltransferase of Novosphingobium aromaticivorans (strain ATCC 700278 / DSM 12444 / CCUG 56034 / CIP 105152 / NBRC 16084 / F199).